The following is a 198-amino-acid chain: Imidazoleglycerol-phosphate dehydratase (198 aa).

It belongs to the imidazoleglycerol-phosphate dehydratase family.

The protein resides in the cytoplasm. The catalysed reaction is D-erythro-1-(imidazol-4-yl)glycerol 3-phosphate = 3-(imidazol-4-yl)-2-oxopropyl phosphate + H2O. It functions in the pathway amino-acid biosynthesis; L-histidine biosynthesis; L-histidine from 5-phospho-alpha-D-ribose 1-diphosphate: step 6/9. This Herminiimonas arsenicoxydans protein is Imidazoleglycerol-phosphate dehydratase.